The primary structure comprises 363 residues: Protein RecA (363 aa).

Residue 79 to 86 (GPESSGKT) coordinates ATP.

This sequence belongs to the RecA family.

It is found in the cytoplasm. Can catalyze the hydrolysis of ATP in the presence of single-stranded DNA, the ATP-dependent uptake of single-stranded DNA by duplex DNA, and the ATP-dependent hybridization of homologous single-stranded DNAs. It interacts with LexA causing its activation and leading to its autocatalytic cleavage. This chain is Protein RecA, found in Borrelia turicatae (strain 91E135).